A 92-amino-acid chain; its full sequence is Small ribosomal subunit protein uS19 (92 aa).

The protein belongs to the universal ribosomal protein uS19 family.

Protein S19 forms a complex with S13 that binds strongly to the 16S ribosomal RNA. The protein is Small ribosomal subunit protein uS19 of Gloeobacter violaceus (strain ATCC 29082 / PCC 7421).